Consider the following 394-residue polypeptide: 3-amino-4-hydroxybenzoate 2-monooxygenase (394 aa).

Residues A16 and R109 each coordinate FAD. The active-site Proton acceptor is the Y214. FAD is bound at residue D287.

It belongs to the 6-hydroxynicotinate 3-monooxygenase family. FAD serves as cofactor.

The enzyme catalyses 3-amino-4-hydroxybenzoate + NADPH + O2 + H(+) = 3-amino-2,4-dihydroxybenzoate + NADP(+) + H2O. Its pathway is antibiotic biosynthesis. Part of a gene cluster involved in the biosynthesis of cremeomycin, a light-sensitive o-diazoquinone with antibacterial and antiproliferative effects. Catalyzes the hydroxylation of 3-amino-4-hydroxybenzoate (3,4-AHBA) to 3-amino-2,4-dihydroxybenzoate (3,2,4-ADHBA). The chain is 3-amino-4-hydroxybenzoate 2-monooxygenase from Streptomyces cremeus.